Here is an 842-residue protein sequence, read N- to C-terminus: Protein translocase subunit SecA (842 aa).

Residues Gln-85, 103 to 107 (GEGKT), and Asp-493 contribute to the ATP site. 4 residues coordinate Zn(2+): Cys-825, Cys-827, Cys-836, and His-837.

The protein belongs to the SecA family. As to quaternary structure, monomer and homodimer. Part of the essential Sec protein translocation apparatus which comprises SecA, SecYEG and auxiliary proteins SecDF. Other proteins may also be involved. Zn(2+) serves as cofactor.

It is found in the cell membrane. The protein resides in the cytoplasm. The enzyme catalyses ATP + H2O + cellular proteinSide 1 = ADP + phosphate + cellular proteinSide 2.. Functionally, part of the Sec protein translocase complex. Interacts with the SecYEG preprotein conducting channel. Has a central role in coupling the hydrolysis of ATP to the transfer of proteins into and across the cell membrane, serving as an ATP-driven molecular motor driving the stepwise translocation of polypeptide chains across the membrane. This is Protein translocase subunit SecA from Streptococcus equi subsp. zooepidemicus (strain MGCS10565).